Consider the following 637-residue polypeptide: Chaperone protein DnaK (637 aa).

Position 198 is a phosphothreonine; by autocatalysis (Thr198). Residues 600 to 637 (IAQQQAQAQQAQGADAGAQSKDDDVVDAEFEEVKDDKK) form a disordered region. Residues 601 to 618 (AQQQAQAQQAQGADAGAQ) are compositionally biased toward low complexity. Acidic residues predominate over residues 623 to 637 (DVVDAEFEEVKDDKK).

The protein belongs to the heat shock protein 70 family.

Its function is as follows. Acts as a chaperone. The polypeptide is Chaperone protein DnaK (Vibrio parahaemolyticus serotype O3:K6 (strain RIMD 2210633)).